We begin with the raw amino-acid sequence, 279 residues long: Oxygen-dependent coproporphyrinogen-III oxidase (279 aa).

S102 is a binding site for substrate. A divalent metal cation contacts are provided by H106 and H116. The active-site Proton donor is H116. Substrate is bound at residue 118 to 120 (NTR). Positions 149 and 179 each coordinate a divalent metal cation. The interval 244–279 (YVEFNLLYDRGTKFGLMTDGNVEAILMSLPPEVKFN) is important for dimerization.

This sequence belongs to the aerobic coproporphyrinogen-III oxidase family. In terms of assembly, homodimer. The cofactor is a divalent metal cation.

It is found in the cytoplasm. The catalysed reaction is coproporphyrinogen III + O2 + 2 H(+) = protoporphyrinogen IX + 2 CO2 + 2 H2O. It participates in porphyrin-containing compound metabolism; protoporphyrin-IX biosynthesis; protoporphyrinogen-IX from coproporphyrinogen-III (O2 route): step 1/1. In terms of biological role, involved in the heme biosynthesis. Catalyzes the aerobic oxidative decarboxylation of propionate groups of rings A and B of coproporphyrinogen-III to yield the vinyl groups in protoporphyrinogen-IX. This chain is Oxygen-dependent coproporphyrinogen-III oxidase, found in Rickettsia peacockii (strain Rustic).